The primary structure comprises 248 residues: MAGHSQFKNIMHRKGKQDSVRSKMFSKLAREITVAAKTGMPDPNMNARLRLAIQNAKAQSMPKDNIERAIKKASGADSENYDEVRYEGYGPGGVAVVVEALTDNRNRTASNVRSIFTKAGGALGETGSVSFSFDRVGEITYKAEVGDADKVMEAAIEAGADDVESSEDGHTIICGFEAMNEVSKALEGVLGEAESVKAIWKPQNTVPVDEEKAQSLMKLIDNLEDDDDVQNVYSNFEVSEEILAKLSA.

Residues 1 to 21 (MAGHSQFKNIMHRKGKQDSVR) form a disordered region.

This sequence belongs to the TACO1 family.

Its subcellular location is the cytoplasm. The chain is Probable transcriptional regulatory protein Atu3727 from Agrobacterium fabrum (strain C58 / ATCC 33970) (Agrobacterium tumefaciens (strain C58)).